A 465-amino-acid polypeptide reads, in one-letter code: 2-(3-amino-3-carboxypropyl)histidine synthase subunit 1 (465 aa).

A compositionally biased stretch (polar residues) spans 1-14; that stretch reads MADSVEQSSVTTKR. Residues 1-42 form a disordered region; that stretch reads MADSVEQSSVTTKRISAKGARKRFVGTKSASGKHSQGVDRVG. A compositionally biased stretch (basic residues) spans 15-25; that stretch reads ISAKGARKRFV. [4Fe-4S] cluster is bound by residues C127, C230, and C357. A disordered region spans residues 442–465; the sequence is SECGSGETCCGKCTKETDKHSSTP. Residues 454–465 are compositionally biased toward basic and acidic residues; that stretch reads CTKETDKHSSTP.

It belongs to the DPH1/DPH2 family. DPH1 subfamily. As to quaternary structure, component of the 2-(3-amino-3-carboxypropyl)histidine synthase complex composed of dph1, dph2, dph3 and a NADH-dependent reductase. [4Fe-4S] cluster serves as cofactor.

It carries out the reaction L-histidyl-[translation elongation factor 2] + S-adenosyl-L-methionine = 2-[(3S)-amino-3-carboxypropyl]-L-histidyl-[translation elongation factor 2] + S-methyl-5'-thioadenosine + H(+). It participates in protein modification; peptidyl-diphthamide biosynthesis. Functionally, catalyzes the first step of diphthamide biosynthesis, a post-translational modification of histidine which occurs in elongation factor 2. Dph1 and dph2 transfer a 3-amino-3-carboxypropyl (ACP) group from S-adenosyl-L-methionine (SAM) to a histidine residue, the reaction is assisted by a reduction system comprising dph3 and a NADH-dependent reductase. In Nematostella vectensis (Starlet sea anemone), this protein is 2-(3-amino-3-carboxypropyl)histidine synthase subunit 1 (dph1).